Here is a 76-residue protein sequence, read N- to C-terminus: Acyl carrier protein (76 aa).

Residues 1 to 76 form the Carrier domain; it reads MDTFESVKAV…DVVAYIEANK (76 aa). Ser36 carries the post-translational modification O-(pantetheine 4'-phosphoryl)serine.

The protein belongs to the acyl carrier protein (ACP) family. 4'-phosphopantetheine is transferred from CoA to a specific serine of apo-ACP by AcpS. This modification is essential for activity because fatty acids are bound in thioester linkage to the sulfhydryl of the prosthetic group.

The protein resides in the cytoplasm. The protein operates within lipid metabolism; fatty acid biosynthesis. Its function is as follows. Carrier of the growing fatty acid chain in fatty acid biosynthesis. The polypeptide is Acyl carrier protein (Helicobacter hepaticus (strain ATCC 51449 / 3B1)).